Reading from the N-terminus, the 806-residue chain is DNA topoisomerase 1 (806 aa).

A compositionally biased stretch (low complexity) spans 1 to 15 (MSVVSNHHSNGNGNS). The tract at residues 1–236 (MSVVSNHHSN…KKEPPKKKVK (236 aa)) is disordered. The segment covering 24–34 (DEIKKEVKDEP) has biased composition (basic and acidic residues). 2 stretches are compositionally biased toward basic residues: residues 49–60 (RDKKEKKQKKRK) and 98–108 (EKKKSKKNNKK). Acidic residues predominate over residues 113–127 (SSEDDDEESEGDVSE). Residues 128 to 137 (EDVKPQIHSD) are compositionally biased toward basic and acidic residues. The segment covering 138–153 (DELEEEDEAPTTDDEE) has biased composition (acidic residues). The segment covering 159–176 (EKERRKKEKREKKERKEK) has biased composition (basic residues). Residues 177-188 (KRLEKENRKIKE) show a composition bias toward basic and acidic residues. The span at 189–199 (EDDEDSDDEDD) shows a compositional bias: acidic residues. The span at 210-229 (KGAEKSKPSTSKKDAGGKKE) shows a compositional bias: basic and acidic residues. Interaction with DNA stretches follow at residues 467–468 (KY), 530–535 (RAGNEK), and 634–636 (TVK). The region spanning 474-803 (SSKIKGEKDF…IDMTNSSDEE (330 aa)) is the Topo IB-type catalytic domain. Y761 (O-(3'-phospho-DNA)-tyrosine intermediate) is an active-site residue.

It belongs to the type IB topoisomerase family. As to expression, expressed in male germ cells and in mature sperm.

The protein localises to the nucleus. It localises to the nucleolus. The protein resides in the chromosome. The catalysed reaction is ATP-independent breakage of single-stranded DNA, followed by passage and rejoining.. Releases the supercoiling and torsional tension of DNA introduced during the DNA replication and transcription by transiently cleaving and rejoining one strand of the DNA duplex. Introduces a single-strand break via transesterification at a target site in duplex DNA. The scissile phosphodiester is attacked by the catalytic tyrosine of the enzyme, resulting in the formation of a DNA-(3'-phosphotyrosyl)-enzyme intermediate and the expulsion of a 5'-OH DNA strand. The free DNA strand then rotates around the intact phosphodiester bond on the opposing strand, thus removing DNA supercoils. Finally, in the religation step, the DNA 5'-OH attacks the covalent intermediate to expel the active-site tyrosine and restore the DNA phosphodiester backbone. Required for normal spermatogenesis and oogenesis. This chain is DNA topoisomerase 1 (top-1), found in Caenorhabditis elegans.